A 420-amino-acid chain; its full sequence is MSSETVSYFSHPFPRRQSVGVSVGGVIVGGSAPVVVQSMTNTDTADVDSTVAQVAALHRAGSEIVRITVDRDESAAAVPKIRERLERLGHDVPLVGDFHYIGHKLLADHPACAEALAKYRINPGNVGFKDKKDKQFADIVEMAIRYDKPVRIGVNWGSLDQELLTTLMDRNQAEGAPLSAQDVMREAIVQSALISANLAEEIGLGRDKIILSAKVSQVQDLIAVYTMLAQRSNHALHLGLTEAGMGTKGIVASSAAMGILLQQGIGDTIRISLTPEPGGDRTREVQVAQELLQTMGFRQFVPIVAACPGCGRTTSTVFQELAQTIQEDIRRNMPLWREKYPGVEALSVAVMGCIVNGPGESKHADIGISLPGTGETPSAPVFVDGKKVTTLRGPGIAEDFQKMVADYIENRFGLGRKIAS.

Residues Cys307, Cys310, Cys353, and Glu360 each contribute to the [4Fe-4S] cluster site.

The protein belongs to the IspG family. The cofactor is [4Fe-4S] cluster.

It carries out the reaction (2E)-4-hydroxy-3-methylbut-2-enyl diphosphate + oxidized [flavodoxin] + H2O + 2 H(+) = 2-C-methyl-D-erythritol 2,4-cyclic diphosphate + reduced [flavodoxin]. Its pathway is isoprenoid biosynthesis; isopentenyl diphosphate biosynthesis via DXP pathway; isopentenyl diphosphate from 1-deoxy-D-xylulose 5-phosphate: step 5/6. Converts 2C-methyl-D-erythritol 2,4-cyclodiphosphate (ME-2,4cPP) into 1-hydroxy-2-methyl-2-(E)-butenyl 4-diphosphate. This Brucella melitensis biotype 2 (strain ATCC 23457) protein is 4-hydroxy-3-methylbut-2-en-1-yl diphosphate synthase (flavodoxin).